A 178-amino-acid chain; its full sequence is uncharacterized protein (178 aa).

The signal sequence occupies residues M1–A23.

This is an uncharacterized protein from Invertebrate iridescent virus 3 (IIV-3).